We begin with the raw amino-acid sequence, 405 residues long: Tryptophan synthase beta chain (405 aa).

Residue Lys-98 is modified to N6-(pyridoxal phosphate)lysine.

It belongs to the TrpB family. As to quaternary structure, tetramer of two alpha and two beta chains. It depends on pyridoxal 5'-phosphate as a cofactor.

The enzyme catalyses (1S,2R)-1-C-(indol-3-yl)glycerol 3-phosphate + L-serine = D-glyceraldehyde 3-phosphate + L-tryptophan + H2O. The protein operates within amino-acid biosynthesis; L-tryptophan biosynthesis; L-tryptophan from chorismate: step 5/5. In terms of biological role, the beta subunit is responsible for the synthesis of L-tryptophan from indole and L-serine. This chain is Tryptophan synthase beta chain, found in Xanthomonas oryzae pv. oryzae (strain MAFF 311018).